The chain runs to 394 residues: Tubulin-like protein CetZ4 (394 aa).

Residues 10-14 (QAGGK), 110-112 (GTG), Glu142, Asn169, and Asn187 contribute to the GTP site.

The protein belongs to the CetZ family.

It localises to the cytoplasm. Functionally, involved in cell shape control. This Haloferax volcanii (strain ATCC 29605 / DSM 3757 / JCM 8879 / NBRC 14742 / NCIMB 2012 / VKM B-1768 / DS2) (Halobacterium volcanii) protein is Tubulin-like protein CetZ4.